Reading from the N-terminus, the 2371-residue chain is Reducing polyketide synthase DEP5 (2371 aa).

Residues leucine 47–serine 477 form the Ketosynthase family 3 (KS3) domain. Catalysis depends on for beta-ketoacyl synthase activity residues cysteine 221, histidine 358, and histidine 399. Positions valine 593–serine 905 are malonyl-CoA:ACP transacylase (MAT) domain. The active-site For malonyltransferase activity is serine 685. The N-terminal hotdog fold stretch occupies residues histidine 982 to lysine 1120. The interval histidine 982 to methionine 1158 is dehydratase (DH) domain. Residues histidine 982 to glutamine 1286 form the PKS/mFAS DH domain. Histidine 1014 serves as the catalytic Proton acceptor; for dehydratase activity. The segment at proline 1132 to glutamine 1286 is C-terminal hotdog fold. Aspartate 1195 serves as the catalytic Proton donor; for dehydratase activity. Residues glycine 1656–leucine 1964 form an enoyl reductase (ER) domain region. The tract at residues alanine 1988 to methionine 2163 is ketoreductase (KR) domain. One can recognise a Carrier domain in the interval serine 2286 to glutamine 2364. Serine 2323 bears the O-(pantetheine 4'-phosphoryl)serine mark.

It functions in the pathway polyketide biosynthesis. In terms of biological role, part of the gene cluster that mediates the biosynthesis of depudecin, a highly oxidized eleven-carbon linear polyketide that acts as a histone deacetylase (HDAC) inhibitor and makes a small contribution to pathogenesis. The reducing polyketide synthase DEP5 is the central enzyme in depudecin biosynthesis by yielding the backbone polyketide chain. The monooxygenases DEP2 and DEP4, as well as the uncharacterized protein DEP1, then act as tailoring enzymes to modify the intermediate polyketide chain into depudecin. The protein is Reducing polyketide synthase DEP5 of Fusarium langsethiae.